The primary structure comprises 1052 residues: Focal adhesion kinase 1 (1052 aa).

Residues 1–27 (MAAAYLDPNLNHTPNSSTKTHLGTGME) are disordered. Position 2 is an N-acetylalanine (A2). Position 5 is a phosphotyrosine (Y5). Positions 10 to 21 (LNHTPNSSTKTH) are enriched in polar residues. At T13 the chain carries Phosphothreonine. 2 positions are modified to phosphoserine: S29 and S54. The FERM domain maps to 35–355 (RVLKVFHYFE…GYCRLVNGTS (321 aa)). Residue K152 forms a Glycyl lysine isopeptide (Lys-Gly) (interchain with G-Cter in SUMO) linkage. Y397 bears the Phosphotyrosine; by autocatalysis mark. Y407 carries the phosphotyrosine modification. Residues 422 to 680 (IELGRCIGEG…ELKAQLSTIL (259 aa)) enclose the Protein kinase domain. Residues 428–434 (IGEGQFG), K454, and 500–502 (ELC) contribute to the ATP site. The active-site Proton acceptor is the D546. Y570 carries the phosphotyrosine modification. 2 positions are modified to phosphotyrosine; by RET and SRC: Y576 and Y577. Phosphoserine is present on S580. Residues 684–697 (KAQQEERMRMESRR) show a composition bias toward basic and acidic residues. Disordered regions lie at residues 684–734 (KAQQ…PSPQ) and 839–922 (LSRG…RSND). The tract at residues 707–1052 (GSDEAPPKPS…LKMLGQTRPH (346 aa)) is interaction with TGFB1I1. S722 bears the Phosphoserine mark. Phosphoserine; by CDK5 is present on S732. The segment covering 839 to 849 (LSRGSIDREDG) has biased composition (basic and acidic residues). Position 843 is a phosphoserine (S843). Y861 carries the post-translational modification Phosphotyrosine. Positions 869 to 880 (PAAPPKKPPRPG) are enriched in pro residues. 2 positions are modified to phosphoserine: S887 and S910. The interval 912 to 1052 (PPTANLDRSN…LKMLGQTRPH (141 aa)) is interaction with ARHGEF28. T914 carries the phosphothreonine modification. Y925 carries the phosphotyrosine modification.

The protein belongs to the protein kinase superfamily. Tyr protein kinase family. FAK subfamily. In terms of assembly, interacts (via first Pro-rich region) with CAS family members (via SH3 domain), including BCAR1, BCAR3, and CASS4. Interacts with NEDD9 (via SH3 domain). Interacts with GIT1. Interacts with SORBS1. Interacts with ARHGEF28. Interacts with SHB. Part of a complex composed of THSD1, PTK2/FAK1, TLN1 and VCL. Interacts with PXN and TLN1. Interacts with STAT1. Interacts with DCC. Interacts with WASL. Interacts with ARHGEF7. Interacts with GRB2 and GRB7. Component of a complex that contains at least FER, CTTN and PTK2/FAK1. Interacts with BMX. Interacts with TGFB1I1. Interacts with STEAP4. Interacts with ZFYVE21. Interacts with ESR1. Interacts with PIK3R1 or PIK3R2. Interacts with SRC, FGR, FLT4 and RET. Interacts with EPHA2 in resting cells; activation of EPHA2 recruits PTPN11, leading to dephosphorylation of PTK2/FAK1 and dissociation of the complex. Interacts with EPHA1 (kinase activity-dependent). Interacts with CD4; this interaction requires the presence of HIV-1 gp120. Interacts with PIAS1. Interacts with ARHGAP26 and SHC1. Interacts with RB1CC1; this inhibits PTK2/FAK1 activity and activation of downstream signaling pathways. Interacts with P53/TP53 and MDM2. Interacts with LPXN (via LD motif 3). Interacts with MISP. Interacts with CIB1 isoform 2. Interacts with CD36. Interacts with EMP2; regulates PTK2 activation and localization. Interacts with DSCAM. Interacts with AMBRA1. Interacts (when tyrosine-phosphorylated) with tensin TNS1; the interaction is increased by phosphorylation of TNS1. Post-translationally, phosphorylated on tyrosine residues upon activation, e.g. upon integrin signaling. Tyr-397 is the major autophosphorylation site, but other kinases can also phosphorylate this residue. Phosphorylation at Tyr-397 promotes interaction with SRC and SRC family members, leading to phosphorylation at Tyr-576, Tyr-577 and at additional tyrosine residues. FGR promotes phosphorylation at Tyr-397 and Tyr-576. FER promotes phosphorylation at Tyr-577, Tyr-861 and Tyr-925, even when cells are not adherent. Tyr-397, Tyr-576 and Ser-722 are phosphorylated only when cells are adherent. Phosphorylation at Tyr-397 is important for interaction with BMX, PIK3R1 and SHC1. Phosphorylation at Tyr-925 is important for interaction with GRB2. Dephosphorylated by PTPN11; PTPN11 is recruited to PTK2 via EPHA2 (tyrosine phosphorylated). Microtubule-induced dephosphorylation at Tyr-397 is crucial for the induction of focal adhesion disassembly; this dephosphorylation could be catalyzed by PTPN11 and regulated by ZFYVE21. Phosphorylation on tyrosine residues is enhanced by NTN1. Sumoylated; this enhances autophosphorylation. As to expression, detected in B and T-lymphocytes. Isoform 1 and isoform 6 are detected in lung fibroblasts (at protein level). Ubiquitous. Expressed in epithelial cells (at protein level).

The protein localises to the cell junction. It localises to the focal adhesion. Its subcellular location is the cell membrane. It is found in the cytoplasm. The protein resides in the perinuclear region. The protein localises to the cell cortex. It localises to the cytoskeleton. Its subcellular location is the microtubule organizing center. It is found in the centrosome. The protein resides in the nucleus. The protein localises to the cilium basal body. It catalyses the reaction L-tyrosyl-[protein] + ATP = O-phospho-L-tyrosyl-[protein] + ADP + H(+). Its activity is regulated as follows. Subject to autoinhibition, mediated by interactions between the FERM domain and the kinase domain. Activated by autophosphorylation at Tyr-397. This promotes interaction with SRC and phosphorylation at Tyr-576 and Tyr-577 in the kinase activation loop. Phosphorylation at Tyr-576 and Tyr-577 is required for maximal kinase activity. Inhibited by TAC544, TAE226, PF-573,228 and PF-562,271. Functionally, non-receptor protein-tyrosine kinase that plays an essential role in regulating cell migration, adhesion, spreading, reorganization of the actin cytoskeleton, formation and disassembly of focal adhesions and cell protrusions, cell cycle progression, cell proliferation and apoptosis. Required for early embryonic development and placenta development. Required for embryonic angiogenesis, normal cardiomyocyte migration and proliferation, and normal heart development. Regulates axon growth and neuronal cell migration, axon branching and synapse formation; required for normal development of the nervous system. Plays a role in osteogenesis and differentiation of osteoblasts. Functions in integrin signal transduction, but also in signaling downstream of numerous growth factor receptors, G-protein coupled receptors (GPCR), EPHA2, netrin receptors and LDL receptors. Forms multisubunit signaling complexes with SRC and SRC family members upon activation; this leads to the phosphorylation of additional tyrosine residues, creating binding sites for scaffold proteins, effectors and substrates. Regulates numerous signaling pathways. Promotes activation of phosphatidylinositol 3-kinase and the AKT1 signaling cascade. Promotes activation of MAPK1/ERK2, MAPK3/ERK1 and the MAP kinase signaling cascade. Promotes localized and transient activation of guanine nucleotide exchange factors (GEFs) and GTPase-activating proteins (GAPs), and thereby modulates the activity of Rho family GTPases. Signaling via CAS family members mediates activation of RAC1. Phosphorylates NEDD9 following integrin stimulation. Recruits the ubiquitin ligase MDM2 to P53/TP53 in the nucleus, and thereby regulates P53/TP53 activity, P53/TP53 ubiquitination and proteasomal degradation. Phosphorylates SRC; this increases SRC kinase activity. Phosphorylates ACTN1, ARHGEF7, GRB7, RET and WASL. Promotes phosphorylation of PXN and STAT1; most likely PXN and STAT1 are phosphorylated by a SRC family kinase that is recruited to autophosphorylated PTK2/FAK1, rather than by PTK2/FAK1 itself. Promotes phosphorylation of BCAR1; GIT2 and SHC1; this requires both SRC and PTK2/FAK1. Promotes phosphorylation of BMX and PIK3R1. Isoform 6 (FRNK) does not contain a kinase domain and inhibits PTK2/FAK1 phosphorylation and signaling. Its enhanced expression can attenuate the nuclear accumulation of LPXN and limit its ability to enhance serum response factor (SRF)-dependent gene transcription. Isoform 6 (FRNK) does not contain a kinase domain and inhibits PTK2/FAK1 phosphorylation and signaling. Its enhanced expression can attenuate the nuclear accumulation of LPXN and limit its ability to enhance serum response factor (SRF)-dependent gene transcription. The chain is Focal adhesion kinase 1 from Homo sapiens (Human).